Here is a 1412-residue protein sequence, read N- to C-terminus: DNA-directed RNA polymerase subunit beta' (1412 aa).

The Zn(2+) site is built by cysteine 70, cysteine 72, cysteine 85, and cysteine 88. Positions 460, 462, and 464 each coordinate Mg(2+). Zn(2+) is bound by residues cysteine 819, cysteine 893, cysteine 900, and cysteine 903. The segment at alanine 1391–glutamate 1412 is disordered.

Belongs to the RNA polymerase beta' chain family. The RNAP catalytic core consists of 2 alpha, 1 beta, 1 beta' and 1 omega subunit. When a sigma factor is associated with the core the holoenzyme is formed, which can initiate transcription. Mg(2+) serves as cofactor. Zn(2+) is required as a cofactor.

The enzyme catalyses RNA(n) + a ribonucleoside 5'-triphosphate = RNA(n+1) + diphosphate. Its function is as follows. DNA-dependent RNA polymerase catalyzes the transcription of DNA into RNA using the four ribonucleoside triphosphates as substrates. The protein is DNA-directed RNA polymerase subunit beta' of Paraburkholderia phytofirmans (strain DSM 17436 / LMG 22146 / PsJN) (Burkholderia phytofirmans).